The primary structure comprises 275 residues: Glutamate racemase (275 aa).

Substrate contacts are provided by residues 12–13 (DS) and 44–45 (YG). Residue cysteine 75 is the Proton donor/acceptor of the active site. Residue 76–77 (NT) coordinates substrate. Residue cysteine 185 is the Proton donor/acceptor of the active site. 186 to 187 (TH) lines the substrate pocket.

Belongs to the aspartate/glutamate racemases family.

The enzyme catalyses L-glutamate = D-glutamate. The protein operates within cell wall biogenesis; peptidoglycan biosynthesis. In terms of biological role, provides the (R)-glutamate required for cell wall biosynthesis. This Mycolicibacterium paratuberculosis (strain ATCC BAA-968 / K-10) (Mycobacterium paratuberculosis) protein is Glutamate racemase.